The sequence spans 791 residues: Protein Rf1, mitochondrial (791 aa).

A mitochondrion-targeting transit peptide spans 1 to 27; sequence MARRAASRAVGALRSDGSIQGRGGRAG. The segment at 1 to 31 is disordered; it reads MARRAASRAVGALRSDGSIQGRGGRAGGSGA. Gly residues predominate over residues 20 to 30; the sequence is QGRGGRAGGSG. PPR repeat units lie at residues 86-120, 121-156, 157-194, 195-229, 230-264, 265-299, 300-334, 335-369, 370-404, 405-439, 440-474, 475-509, 510-544, 545-579, 580-614, 615-649, 650-684, 685-719, and 720-754; these read DLCTYGILIGCCCRAGRLDLGFAALGNVIKKGFRV, DAIAFTPLLKGLCADKRTSDAMDIVLRRMTELGCIP, NVFSYNILLKGLCDENRSQEALELLHMMADDRGGGSPP, DVVSYTTVINGFFKEGDSDKAYSTYHEMLDRGILP, DVVTYNSIIAALCKAQAMDKAMEVLNTMVKNGVMP, DCMTYNSILHGYCSSGQPKEAIGFLKKMRSDGVEP, DVVTYSLLMDYLCKNGRCMEARKIFDSMTKRGLKP, EITTYGTLLQGYATKGALVEMHGLLDLMVRNGIHP, DHYVFSILICAYAKQGKVDQAMLVFSKMRQQGLNP, NAVTYGAVIGILCKSGRVEDAMLYFEQMIDEGLSP, GNIVYNSLIHGLCTCNKWERAEELILEMLDRGICL, NTIFFNSIIDSHCKEGRVIESEKLFELMVRIGVKP, NVITYNTLINGYCLAGKMDEAMKLLSGMVSVGLKP, NTVTYSTLINGYCKISRMEDALVLFKEMESSGVSP, DIITYNIILQGLFQTRRTAAAKELYVRITESGTQI, ELSTYNIILHGLCKNKLTDDALQMFQNLCLMDLKL, EARTFNIMIDALLKVGRNDEAKDLFVAFSSNGLVP, NYWTYRLMAENIIGQGLLEELDQLFLSMEDNGCTV, and DSGMLNFIVRELLQRGEITRAGTYLSMIDEKHFSL.

The protein localises to the mitochondrion. Its function is as follows. Reduces the expression of the cytoplasmic male sterility (CMS)-associated mitochondrial gene ORF79, encoding a cytotoxic peptide. Can restore male fertility by blocking ORF79 production via endonucleolytic cleavage of dicistronic ATP6/ORF79 mRNA. Promotes the editing of ATP6 mRNAs independently of its cleavage function. This chain is Protein Rf1, mitochondrial (Rf1), found in Oryza sativa subsp. indica (Rice).